The following is a 20-amino-acid chain: VPPGGLTXAQXFTIQHIXMT.

The active-site Proton acceptor is H16.

Belongs to the pancreatic ribonuclease family. In terms of assembly, interacts with and forms a tight 1:1 complex with RNH1. Dimerization of two such complexes may occur.

It is found in the lysosome. Its subcellular location is the cytoplasmic granule. The enzyme catalyses an [RNA] containing cytidine + H2O = an [RNA]-3'-cytidine-3'-phosphate + a 5'-hydroxy-ribonucleotide-3'-[RNA].. It carries out the reaction an [RNA] containing uridine + H2O = an [RNA]-3'-uridine-3'-phosphate + a 5'-hydroxy-ribonucleotide-3'-[RNA].. Functionally, this is a non-secretory ribonuclease. It is a pyrimidine specific nuclease with a slight preference for U. Cytotoxin and helminthotoxin. Possesses a wide variety of biological activities. The protein is Non-secretory ribonuclease (RNASE2) of Sus scrofa (Pig).